The chain runs to 472 residues: MVVLFKAGSLGPATNSFIIAATRRGQIRLYNILQDTTIPEPKRKYIPSSGTYPKGFRVSGTHVGVKAANTKYPDLALISSDKPCTAAAAVFTTNKFQAAPVQLSKVTLEQRKGKGIQSVVINSGCANAVTGKGGLEDARSMAAKVDECNGTSEPSTLVMSTGVIGQRLPISKILDKIPTAYSNLASTHNAWLATARAICTTDTFPKLISRTFSLPSSPGITYSLAGMTKGAGMIHPNMATLLGVLCTDAPVDASVMKPLLLHAVSRSFNSISIDGDTSTNDTIAFLANGAAGGQTIASSTSQDYAALQKVLTSFAQSLSQLVVRDGEGATKFVTVRVQNSPCYDSARRIASTIARSPLVKTALYGRDANWGRILCAVGYTDGVTEGTVVPERTSVSFKPVDGSPTLRLLVNGEPEVVDEERASAILQDEDLEIIVDLGGGDKGEKGLGGEEAVYWFCDFSHEYVTINGDYRT.

6 residues coordinate substrate: T200, K229, T240, E327, N467, and T472. The Nucleophile role is filled by T240.

This sequence belongs to the ArgJ family. As to quaternary structure, heterodimer of an alpha and a beta chain. The alpha and beta chains are autoproteolytically processed from a single precursor protein within the mitochondrion.

The protein resides in the mitochondrion matrix. The catalysed reaction is N(2)-acetyl-L-ornithine + L-glutamate = N-acetyl-L-glutamate + L-ornithine. The enzyme catalyses L-glutamate + acetyl-CoA = N-acetyl-L-glutamate + CoA + H(+). The protein operates within amino-acid biosynthesis; L-arginine biosynthesis; L-ornithine and N-acetyl-L-glutamate from L-glutamate and N(2)-acetyl-L-ornithine (cyclic): step 1/1. Its pathway is amino-acid biosynthesis; L-arginine biosynthesis; N(2)-acetyl-L-ornithine from L-glutamate: step 1/4. Functionally, catalyzes two activities which are involved in the cyclic version of arginine biosynthesis: the synthesis of acetylglutamate from glutamate and acetyl-CoA, and of ornithine by transacetylation between acetylornithine and glutamate. The protein is Arginine biosynthesis bifunctional protein ArgJ, mitochondrial of Talaromyces marneffei (strain ATCC 18224 / CBS 334.59 / QM 7333) (Penicillium marneffei).